Here is a 357-residue protein sequence, read N- to C-terminus: UDP-N-acetylglucosamine--N-acetylmuramyl-(pentapeptide) pyrophosphoryl-undecaprenol N-acetylglucosamine transferase (357 aa).

UDP-N-acetyl-alpha-D-glucosamine contacts are provided by residues 15-17, Asn-124, Arg-165, Ser-194, and Gln-288; that span reads TGG.

It belongs to the glycosyltransferase 28 family. MurG subfamily.

The protein localises to the cell inner membrane. The enzyme catalyses di-trans,octa-cis-undecaprenyl diphospho-N-acetyl-alpha-D-muramoyl-L-alanyl-D-glutamyl-meso-2,6-diaminopimeloyl-D-alanyl-D-alanine + UDP-N-acetyl-alpha-D-glucosamine = di-trans,octa-cis-undecaprenyl diphospho-[N-acetyl-alpha-D-glucosaminyl-(1-&gt;4)]-N-acetyl-alpha-D-muramoyl-L-alanyl-D-glutamyl-meso-2,6-diaminopimeloyl-D-alanyl-D-alanine + UDP + H(+). It participates in cell wall biogenesis; peptidoglycan biosynthesis. Functionally, cell wall formation. Catalyzes the transfer of a GlcNAc subunit on undecaprenyl-pyrophosphoryl-MurNAc-pentapeptide (lipid intermediate I) to form undecaprenyl-pyrophosphoryl-MurNAc-(pentapeptide)GlcNAc (lipid intermediate II). This chain is UDP-N-acetylglucosamine--N-acetylmuramyl-(pentapeptide) pyrophosphoryl-undecaprenol N-acetylglucosamine transferase, found in Nostoc sp. (strain PCC 7120 / SAG 25.82 / UTEX 2576).